The chain runs to 77 residues: ATP synthase subunit 9, mitochondrial (77 aa).

2 consecutive transmembrane segments (helical) span residues 8–28 and 45–72; these read MGAGAATNASAGAAIGIGNVL and LFGYAILGFALTEANASFAPMMAFLISF.

It belongs to the ATPase C chain family. As to quaternary structure, F-type ATPases have 2 components, CF(1) - the catalytic core - and CF(0) - the membrane proton channel. CF(1) has five subunits: alpha(3), beta(3), gamma(1), delta(1), epsilon(1). CF(0) has three main subunits: a, b and c.

It is found in the mitochondrion membrane. In terms of biological role, this protein is one of the chains of the nonenzymatic membrane component (F0) of mitochondrial ATPase. The polypeptide is ATP synthase subunit 9, mitochondrial (ATP9) (Petunia sp. (Petunia)).